The chain runs to 122 residues: Large ribosomal subunit protein uL18 (122 aa).

A compositionally biased stretch (basic residues) spans 1-21; that stretch reads MSKLSRKQQTQKRHRRLRRHL. The tract at residues 1–26 is disordered; that stretch reads MSKLSRKQQTQKRHRRLRRHLTGTSD.

It belongs to the universal ribosomal protein uL18 family. As to quaternary structure, part of the 50S ribosomal subunit; part of the 5S rRNA/L5/L18/L25 subcomplex. Contacts the 5S and 23S rRNAs.

In terms of biological role, this is one of the proteins that bind and probably mediate the attachment of the 5S RNA into the large ribosomal subunit, where it forms part of the central protuberance. This is Large ribosomal subunit protein uL18 from Parasynechococcus marenigrum (strain WH8102).